We begin with the raw amino-acid sequence, 69 residues long: Light-harvesting protein B-870 beta chain (69 aa).

A propeptide spanning residues 1–2 (MA) is cleaved from the precursor. Over 3–22 (EVKQESLSGITEGEAKEFHK) the chain is Cytoplasmic. Residues His21 and His39 each coordinate a bacteriochlorophyll. A helical membrane pass occupies residues 23-45 (IFTSSILVFFGVAAFAHLLVWIW). Residues 46-56 (RPWVPGPNGYS) are Periplasmic-facing. Positions 57–69 (ALETLTQTLTYLS) are excised as a propeptide.

The protein belongs to the antenna complex beta subunit family. The core complex is formed by different alpha and beta chains, binding bacteriochlorophyll molecules, and arranged most probably in tetrameric structures disposed around the reaction center. The non-pigmented gamma chains may constitute additional components.

The protein resides in the cell inner membrane. Antenna complexes are light-harvesting systems, which transfer the excitation energy to the reaction centers. The protein is Light-harvesting protein B-870 beta chain of Rhodospirillum rubrum (strain ATCC 11170 / ATH 1.1.1 / DSM 467 / LMG 4362 / NCIMB 8255 / S1).